We begin with the raw amino-acid sequence, 159 residues long: Neuroglobin (159 aa).

The Globin domain occupies Lys-3 to Ala-151. Heme b-binding residues include His-66 and His-98.

This sequence belongs to the globin family. In terms of assembly, monomer. Homodimers and homotetramers. Mainly monomeric but also detected as part of homodimers and homotetramers.

The protein localises to the cytoplasm. It localises to the cytosol. Its subcellular location is the mitochondrion matrix. The catalysed reaction is Fe(III)-heme b-[protein] + nitric oxide + H2O = Fe(II)-heme b-[protein] + nitrite + 2 H(+). In terms of biological role, monomeric globin with a bis-histidyl six-coordinate heme-iron atom through which it can bind dioxygen, carbon monoxide and nitric oxide. Could help transport oxygen and increase its availability to the metabolically active neuronal tissues, though its low quantity in tissues as well as its high affinity for dioxygen, which may limit its oxygen-releasing ability, argue against it. The ferrous/deoxygenated form exhibits a nitrite reductase activity and it could produce nitric oxide which in turn inhibits cellular respiration in response to hypoxia. In its ferrous/deoxygenated state, it may also exhibit GDI (Guanine nucleotide Dissociation Inhibitor) activity toward heterotrimeric G-alpha proteins, thereby regulating signal transduction to facilitate neuroprotective responses in the wake of hypoxia and associated oxidative stress. The protein is Neuroglobin (ngb) of Tetraodon nigroviridis (Spotted green pufferfish).